Consider the following 160-residue polypeptide: Endoribonuclease YbeY (160 aa).

Residues H125, H129, and H135 each coordinate Zn(2+).

The protein belongs to the endoribonuclease YbeY family. Zn(2+) is required as a cofactor.

The protein localises to the cytoplasm. Functionally, single strand-specific metallo-endoribonuclease involved in late-stage 70S ribosome quality control and in maturation of the 3' terminus of the 16S rRNA. This chain is Endoribonuclease YbeY, found in Leuconostoc mesenteroides subsp. mesenteroides (strain ATCC 8293 / DSM 20343 / BCRC 11652 / CCM 1803 / JCM 6124 / NCDO 523 / NBRC 100496 / NCIMB 8023 / NCTC 12954 / NRRL B-1118 / 37Y).